The sequence spans 276 residues: LIMGHMVNAIYQIDEFVNLGANSIEIDVSFDDSANPEYTYHGIPCDCRRWCTKWEYFNGFLKALRKATTPGDSKYHEKLVLVVFDLKTNSLYNYQAYDAGKKLAENLLQHYWNNGNNGGRAYIVLSIPNLAHYKLITGFKETLKNKGHPELMEKVGHDFSGNDNLDQVAKAYKKAGVTGHVWQSDGITNCIASFIRGIDRAKKAVANRDSSNGFINKVYYWTVDKYSTTREALDAGVDGIMTNYPDVIANVLNESAYKTKFRLATYADNPWETFKN.

Histidine 5 is an active-site residue. Mg(2+) is bound by residues glutamate 25 and aspartate 27. Histidine 41 (nucleophile) is an active-site residue. 2 cysteine pairs are disulfide-bonded: cysteine 45/cysteine 51 and cysteine 47/cysteine 190. Aspartate 85 is a binding site for Mg(2+). N-linked (GlcNAc...) asparagine glycosylation is present at asparagine 253.

The protein belongs to the arthropod phospholipase D family. Class II subfamily. Requires Mg(2+) as cofactor. As to expression, expressed by the venom gland.

It localises to the secreted. It carries out the reaction an N-(acyl)-sphingosylphosphocholine = an N-(acyl)-sphingosyl-1,3-cyclic phosphate + choline. The enzyme catalyses an N-(acyl)-sphingosylphosphoethanolamine = an N-(acyl)-sphingosyl-1,3-cyclic phosphate + ethanolamine. The catalysed reaction is a 1-acyl-sn-glycero-3-phosphocholine = a 1-acyl-sn-glycero-2,3-cyclic phosphate + choline. It catalyses the reaction a 1-acyl-sn-glycero-3-phosphoethanolamine = a 1-acyl-sn-glycero-2,3-cyclic phosphate + ethanolamine. Dermonecrotic toxins cleave the phosphodiester linkage between the phosphate and headgroup of certain phospholipids (sphingolipid and lysolipid substrates), forming an alcohol (often choline) and a cyclic phosphate. This toxin acts on sphingomyelin (SM). It may also act on ceramide phosphoethanolamine (CPE), lysophosphatidylcholine (LPC) and lysophosphatidylethanolamine (LPE), but not on lysophosphatidylserine (LPS), and lysophosphatidylglycerol (LPG). It acts by transphosphatidylation, releasing exclusively cyclic phosphate products as second products. Induces dermonecrosis, hemolysis, increased vascular permeability, edema, inflammatory response, and platelet aggregation. This chain is Dermonecrotic toxin LdSicTox-alphaIB2, found in Loxosceles deserta (Desert recluse spider).